Reading from the N-terminus, the 792-residue chain is Probable CoA-transferase Rv1866 (792 aa).

The active-site Nucleophile is the aspartate 558.

The protein belongs to the CoA-transferase III family.

In terms of biological role, probable CoA-transferase. This is Probable CoA-transferase Rv1866 from Mycobacterium tuberculosis (strain ATCC 25618 / H37Rv).